The primary structure comprises 203 residues: MQILLATVAAYLIGSVSFAVVVSAAMGLADPRSYGSKNPGATNVLRSGNKKAAILTLVGDAFKGWLAVWLVKRFGIGGEIGVALAAIAVFLGHLHPVFFRFQGGKGVATAAGVLLAVHPVLGLATALTWLIVAFFFRYSSLAALVAAVFAPIFDVFLFGTHDNPVAWAVLAMSVLLIWRHRSNISKLLAGEESRIGQKKKTGV.

The next 6 helical transmembrane spans lie at 3–23 (ILLA…VVVS), 51–71 (KAAI…VWLV), 74–94 (FGIG…LGHL), 116–136 (AVHP…AFFF), 140–160 (SLAA…LFGT), and 164–178 (PVAW…LLIW).

This sequence belongs to the PlsY family. Probably interacts with PlsX.

The protein resides in the cell inner membrane. It carries out the reaction an acyl phosphate + sn-glycerol 3-phosphate = a 1-acyl-sn-glycero-3-phosphate + phosphate. It functions in the pathway lipid metabolism; phospholipid metabolism. Functionally, catalyzes the transfer of an acyl group from acyl-phosphate (acyl-PO(4)) to glycerol-3-phosphate (G3P) to form lysophosphatidic acid (LPA). This enzyme utilizes acyl-phosphate as fatty acyl donor, but not acyl-CoA or acyl-ACP. The sequence is that of Glycerol-3-phosphate acyltransferase from Burkholderia mallei (strain ATCC 23344).